Reading from the N-terminus, the 499-residue chain is Signal recognition particle subunit SRP54 2 (499 aa).

Positions 1-295 (MVLAELGGSI…DVKPFVSRLL (295 aa)) are G-domain. GTP is bound by residues 108 to 115 (GLQGSGKT), 190 to 194 (DTSGR), and 248 to 251 (TKMD). The M-domain stretch occupies residues 296–499 (GMGDWSGFMD…MGGMFGGGDK (204 aa)).

The protein belongs to the GTP-binding SRP family. SRP54 subfamily. In terms of assembly, component of a signal recognition particle (SRP) complex that consists of a 7SL RNA molecule of 300 nucleotides and six protein subunits: SRP72, SRP68, SRP54, SRP19, SRP14 and SRP9.

It is found in the cytoplasm. The protein localises to the endoplasmic reticulum. It catalyses the reaction GTP + H2O = GDP + phosphate + H(+). In terms of biological role, component of the signal recognition particle (SRP) complex, a ribonucleoprotein complex that mediates the cotranslational targeting of secretory and membrane proteins to the endoplasmic reticulum (ER). As part of the SRP complex, associates with the SRP receptor (SR) component SRPRA to target secretory proteins to the endoplasmic reticulum membrane. Binds to the signal sequence of presecretory proteins when they emerge from the ribosomes. Displays basal GTPase activity, and stimulates reciprocal GTPase activation of the SR subunit SRPRA. Forms a guanosine 5'-triphosphate (GTP)-dependent complex with the SR subunit SRPRA. SR compaction and GTPase mediated rearrangement of SR drive SRP-mediated cotranslational protein translocation into the ER. Requires the presence of SRP9/SRP14 and/or SRP19 to stably interact with RNA. In Solanum lycopersicum (Tomato), this protein is Signal recognition particle subunit SRP54 2.